A 469-amino-acid polypeptide reads, in one-letter code: Acetyl-CoA decarbonylase/synthase complex subunit beta 1 (469 aa).

[Ni-Fe-S] cluster contacts are provided by Cys-189, Cys-192, Cys-278, and Cys-280.

The protein belongs to the CdhC family. As to quaternary structure, monomer. The ACDS complex is made up of alpha, epsilon, beta, gamma and delta chains with a probable stoichiometry of (alpha(2)epsilon(2))(4)-beta(8)-(gamma(1)delta(1))(8) (Potential). It depends on [Ni-Fe-S] cluster as a cofactor.

The catalysed reaction is Co(I)-[corrinoid Fe-S protein] + acetyl-CoA + H(+) = methyl-Co(III)-[corrinoid Fe-S protein] + CO + CoA. It functions in the pathway one-carbon metabolism; methanogenesis from acetate. Part of a complex that catalyzes the reversible cleavage of acetyl-CoA, allowing growth on acetate as sole source of carbon and energy. The alpha-epsilon complex generates CO from CO(2), while the beta subunit (this protein) combines the CO with CoA and a methyl group to form acetyl-CoA. The methyl group, which is incorporated into acetyl-CoA, is transferred to the beta subunit by a corrinoid iron-sulfur protein (the gamma-delta complex). The protein is Acetyl-CoA decarbonylase/synthase complex subunit beta 1 (cdhC1) of Methanosarcina mazei (strain ATCC BAA-159 / DSM 3647 / Goe1 / Go1 / JCM 11833 / OCM 88) (Methanosarcina frisia).